We begin with the raw amino-acid sequence, 212 residues long: Transcriptional repressor CcpN (212 aa).

Positions L6–L70 constitute an HTH deoR-type domain. The H-T-H motif DNA-binding region spans I23–D42. 2 consecutive CBS domains span residues F83 to L139 and M148 to I211.

Transcription repressor that binds to the promoter of gapB and pckA genes, preventing their expression. Acts as a regulator for catabolite repression of gluconeogenic genes. The polypeptide is Transcriptional repressor CcpN (ccpN) (Bacillus subtilis (strain 168)).